The sequence spans 414 residues: Snake venom metalloproteinase atrolysin-D (414 aa).

Residues 1–20 (MIEVLLVTICLAVFPYQGSS) form the signal peptide. Residues 21–190 (IILESGNVND…KASDLNLNPD (170 aa)) constitute a propeptide that is removed on maturation. Gln-191 is subject to Pyrrolidone carboxylic acid. A Peptidase M12B domain is found at 197 to 393 (RYIELVVVAD…YKPQCILNKP (197 aa)). Ca(2+)-binding residues include Glu-200 and Asp-284. Cystine bridges form between Cys-308-Cys-388 and Cys-348-Cys-355. His-333 serves as a coordination point for Zn(2+). Residue Glu-334 is part of the active site. 2 residues coordinate Zn(2+): His-337 and His-343. Ca(2+) is bound by residues Cys-388 and Asn-391. The propeptide occupies 394-414 (LRIDPVSTPVSGNELLEAGEE).

Belongs to the venom metalloproteinase (M12B) family. P-I subfamily. Monomer. The cofactor is Zn(2+). In terms of processing, the N-terminus is blocked. Expressed by the venom gland.

Its subcellular location is the secreted. It carries out the reaction Cleavage of 5-His-|-Leu-6, 10-His-|-Leu-11, 14-Ala-|-Leu-15, 16-Tyr-|-Leu-17 and 23-Gly-|-Phe-24 of insulin B chain. With small molecule substrates prefers hydrophobic residue at P2' and small residue such as Ala, Gly at P1.. Its function is as follows. Snake venom zinc metalloproteinase that causes hemorrhage by provoking the degradation of the sub-endothelial matrix proteins (fibronectin, laminin, type IV collagen, nidogen, and gelatins). This is Snake venom metalloproteinase atrolysin-D from Crotalus atrox (Western diamondback rattlesnake).